The chain runs to 511 residues: MVEQIMIQGTASDAGKSVIVAGLCRLFKNKGKRVVPFKSQNMSLNSFITATGDEMGRAQVFQAEAAGVFPDVRMNPVLLKPTNDRQSQVIFMGAILDNMDAVSYHDFKQTLIPKIQAVYQSLADENDIIVLEGAGSPAEINLNDRDIVNMGMAKMVDAPVVLVADIDKGGVFASIYGTIMLLKEEERARLKGVIINKFRGDVALLQPGIEMIEELTNVPVIGVIPYANLQLEEEDSVSLSGKNYVLDSSALLDIAIICLPRISNFTDFHILEIQPDISVRYIRNLADFGNPDLVIIPGSKNTLEDMAFLEQSGLKKAIQNYAENAGKVIGICGGYQMLGKRMLDPNQVESEKVEIAGLGLLDTETIFLDQKRTTQITGVTFSSEPVEGYEIHMGQTKRGENTQPFCKIKAVNGNQETHEDGAISANKNIIGTYIHGIFDNDIFLGNLFNELLTQKNKSIYPHEIIKLKEHKETEYDKLAALLEANIQMDQLEKIMKGEKICVSTQKPAIKE.

The 193-residue stretch at 251–443 folds into the GATase cobBQ-type domain; sequence LLDIAIICLP…IHGIFDNDIF (193 aa). The active-site Nucleophile is cysteine 332. The active site involves histidine 435.

This sequence belongs to the CobB/CobQ family. CobQ subfamily.

It participates in cofactor biosynthesis; adenosylcobalamin biosynthesis. Its function is as follows. Catalyzes amidations at positions B, D, E, and G on adenosylcobyrinic A,C-diamide. NH(2) groups are provided by glutamine, and one molecule of ATP is hydrogenolyzed for each amidation. The protein is Cobyric acid synthase of Listeria innocua serovar 6a (strain ATCC BAA-680 / CLIP 11262).